We begin with the raw amino-acid sequence, 305 residues long: tRNA dimethylallyltransferase 1 (305 aa).

ATP is bound at residue 10 to 17 (GPTASGKT). 12–17 (TASGKT) provides a ligand contact to substrate. An interaction with substrate tRNA region spans residues 35–38 (DSRQ).

This sequence belongs to the IPP transferase family. In terms of assembly, monomer. The cofactor is Mg(2+).

The enzyme catalyses adenosine(37) in tRNA + dimethylallyl diphosphate = N(6)-dimethylallyladenosine(37) in tRNA + diphosphate. Functionally, catalyzes the transfer of a dimethylallyl group onto the adenine at position 37 in tRNAs that read codons beginning with uridine, leading to the formation of N6-(dimethylallyl)adenosine (i(6)A). The polypeptide is tRNA dimethylallyltransferase 1 (Syntrophus aciditrophicus (strain SB)).